The sequence spans 213 residues: MGRLSAEEGALLVRLARRAVEEYLENARVIEPPRDTPPSLREKSGVFVTIEKILVDPLARRARRELRGCIGYPEPVLPLAEATIHAAIAAATEDPRFPPMTPRELDTVVFEVSVLTKPEPVDYRSPEELPDKIKVGRDGLIVEYGAARGLLLPQVAVDEGWDPEEFLSYACLKAGLRDDAWRHGGLKVYRFQAQIFVETTPKGDVVERFLEVV.

The 201-residue stretch at 7-207 (EEGALLVRLA…ETTPKGDVVE (201 aa)) folds into the AMMECR1 domain.

This Thermofilum pendens (strain DSM 2475 / Hrk 5) protein is Protein Tpen_0748.